Consider the following 305-residue polypeptide: Cbb3-type cytochrome c oxidase subunit CcoP2 (305 aa).

2 helical membrane-spanning segments follow: residues 4–24 (FWSWYVTLLSLGTIAALVWLL) and 57–77 (WWFMLFVGTVIFALGYLVLYP). Cytochrome c domains lie at 130–209 (QALK…RSLS) and 219–300 (VDIE…YSLS). 8 residues coordinate heme c: Cys-143, Cys-146, His-147, Met-186, Cys-232, Cys-235, His-236, and Met-277.

In terms of assembly, component of the cbb3-type cytochrome c oxidase at least composed of CcoN, CcoO, CcoQ and CcoP. Requires heme c as cofactor.

It localises to the cell inner membrane. The protein operates within energy metabolism; oxidative phosphorylation. In terms of biological role, C-type cytochrome. Part of the cbb3-type cytochrome c oxidase complex. CcoP subunit is required for transferring electrons from donor cytochrome c via its heme groups to CcoO subunit. From there, electrons are shuttled to the catalytic binuclear center of CcoN subunit where oxygen reduction takes place. The complex also functions as a proton pump. The chain is Cbb3-type cytochrome c oxidase subunit CcoP2 from Stutzerimonas stutzeri (Pseudomonas stutzeri).